Here is a 143-residue protein sequence, read N- to C-terminus: Ninjurin-2 (143 aa).

Residues 1–61 lie on the Extracellular side of the membrane; that stretch reads MESDRETIHL…KSVLQQGPFA (61 aa). Residues 26–38 form a helix alpha1 region; it reads NFYATKKSVAESM. Positions 39-58 are helix alpha2; the sequence is LDVALFMSNAMRLKSVLQQG. A helical transmembrane segment spans residues 62–93; sequence EYYTTLVTLIIVSLLLQVVISLLLVFIAILNL. Topologically, residues 94–97 are cytoplasmic; the sequence is NEVE. The chain crosses the membrane as a helical span at residues 98-127; it reads NQRHLNKLNNAATILVFITVVINIFITAFG. K104 is a cholesterol binding site. The Extracellular segment spans residues 128–143; sequence AHHAASMAARTSSNPI.

Belongs to the ninjurin family. In terms of assembly, homooligomer; in response to stimuli, homooligomerizes into filaments. In contrast to NINJ1, the filament is curved toward the intracellular space, preventing its circularization on a relatively flat membrane to mediate plasma membrane rupture: curvature is caused by cholesterol-binding at the cytoplasmic leaflet.

Its subcellular location is the cell membrane. Its role in unclear. In contrast to NINJ1 paralog, does not mediate plasma membrane rupture (cytolysis) downstream of necroptotic and pyroptotic programmed cell death. While it is able to oligomerize and form filaments, filaments are curved toward the intracellular space, preventing circularization to mediate plasma membrane rupture. May act as a homophilic transmembrane adhesion molecule involved in nerve regeneration. Promotes axonal growth. This chain is Ninjurin-2 (Ninj2), found in Mus musculus (Mouse).